Here is a 793-residue protein sequence, read N- to C-terminus: Transcription factor castor (793 aa).

Residues Asn44 to Val53 show a composition bias toward polar residues. 3 disordered regions span residues Asn44–Ala101, Val199–Ala259, and Leu272–Tyr296. Low complexity-rich tracts occupy residues Gln54–Gln68, Ser81–Asn98, and Ala210–Gly221. Residue Thr211 is modified to Phosphothreonine. A Phosphoserine modification is found at Ser215. Residues Glu233–Asp242 show a composition bias toward acidic residues. The segment covering Leu245–Ser254 has biased composition (low complexity). Over residues Glu273–Met284 the composition is skewed to polar residues. The segment at Phe377–His402 adopts a C2H2-type 1; atypical zinc-finger fold. C2H2-type zinc fingers lie at residues Tyr439–His463, Tyr498–His522, and Ile556–His580. The interval Glu599–Asn682 is disordered. Residues Gln608–Ser629 show a composition bias toward low complexity. Residues Val630–Ser644 are compositionally biased toward polar residues. Residues Ala650–Leu662 constitute a DNA-binding region (a.T hook).

Expressed in a specific subset of neuroblasts in the ventral nerve cord and the procephalic region in the embryo. Expressed in many, if not all, late delaminating NBs, and in early NBs, but only after they have undergone several rounds of ganglion mother cell-producing divisions.

Its subcellular location is the nucleus. Its function is as follows. Transcription factor that specifies expression of key genes in developing central nervous system (CNS). Essential for many, if not all, late developing neuroblastoma (NB) sublineages. Binds to the 5'-[CG]C[CT][CT]AAAAA[AT]-3' DNA sequence, like hb, suggesting that cas and hb act as a late regulators in early and late CNS NB sublineage, respectively. Acts by repressing expression of nub/pdm-1 and pdm2/pdm-2 POU genes, and restrict their pattern of expression in appropriate cells. Required for a full expression of vvl/drifter and acj6/I-POU; it is however unknown whether it directly activates these genes. Controls engrailed (en) expression in the ventral nerve cord. This Drosophila melanogaster (Fruit fly) protein is Transcription factor castor (cas).